Reading from the N-terminus, the 225-residue chain is MASPSSFCLLAVLLALVSWQAIASDPSPLQDFCVADKHSPVLVNGFACLDPKYVNADHFFKAAMLDTPRKTNKVGSNVTLINVMQIPGLNTLGISIARIDYAPLGENPPHTHPRATEILTVLEGTLYVGFVTSNPNNTLFSKVLNKGDVFVFPEGLIHFQFNPNPHQPAVALAALSSQNPGAITIANAVFGSKPPISDDILAKAFQVEKGTIDWLQAQFWENNHY.

The N-terminal stretch at M1 to A23 is a signal peptide. Cysteines 33 and 48 form a disulfide. Positions A63–D213 constitute a Cupin type-1 domain. The N-linked (GlcNAc...) asparagine glycan is linked to N77. Positions 110, 112, and 117 each coordinate Mn(2+). A glycan (N-linked (GlcNAc...) asparagine) is linked at N136. H158 is a Mn(2+) binding site.

The protein belongs to the germin family. In terms of assembly, oligomer (believed to be a pentamer but probably hexamer).

The protein localises to the secreted. Its subcellular location is the extracellular space. The protein resides in the apoplast. Its function is as follows. Plays a role in broad-spectrum disease resistance. Probably has no oxalate oxidase activity even if the active site is conserved. This Oryza sativa subsp. japonica (Rice) protein is Germin-like protein 8-7 (GER6).